The sequence spans 938 residues: Isoleucine--tRNA ligase (938 aa).

Residues 58-68 carry the 'HIGH' region motif; the sequence is PYANGSIHIGH. Lys-183 bears the N6-acetyllysine mark. An L-isoleucyl-5'-AMP-binding site is contributed by Glu-561. The short motif at 602-606 is the 'KMSKS' region element; that stretch reads KMSKS. Lys-605 is an ATP binding site. Zn(2+) is bound by residues Cys-901, Cys-904, Cys-921, and Cys-924.

It belongs to the class-I aminoacyl-tRNA synthetase family. IleS type 1 subfamily. As to quaternary structure, monomer. The cofactor is Zn(2+).

The protein localises to the cytoplasm. The enzyme catalyses tRNA(Ile) + L-isoleucine + ATP = L-isoleucyl-tRNA(Ile) + AMP + diphosphate. Catalyzes the attachment of isoleucine to tRNA(Ile). As IleRS can inadvertently accommodate and process structurally similar amino acids such as valine, to avoid such errors it has two additional distinct tRNA(Ile)-dependent editing activities. One activity is designated as 'pretransfer' editing and involves the hydrolysis of activated Val-AMP. The other activity is designated 'posttransfer' editing and involves deacylation of mischarged Val-tRNA(Ile). In Escherichia coli O7:K1 (strain IAI39 / ExPEC), this protein is Isoleucine--tRNA ligase.